Reading from the N-terminus, the 241-residue chain is Demethylmenaquinone methyltransferase (241 aa).

Residues Thr-60, Asp-81, and 106–107 (DA) contribute to the S-adenosyl-L-methionine site.

It belongs to the class I-like SAM-binding methyltransferase superfamily. MenG/UbiE family.

The enzyme catalyses a 2-demethylmenaquinol + S-adenosyl-L-methionine = a menaquinol + S-adenosyl-L-homocysteine + H(+). The protein operates within quinol/quinone metabolism; menaquinone biosynthesis; menaquinol from 1,4-dihydroxy-2-naphthoate: step 2/2. Functionally, methyltransferase required for the conversion of demethylmenaquinol (DMKH2) to menaquinol (MKH2). In Staphylococcus epidermidis (strain ATCC 35984 / DSM 28319 / BCRC 17069 / CCUG 31568 / BM 3577 / RP62A), this protein is Demethylmenaquinone methyltransferase.